A 477-amino-acid chain; its full sequence is Octopamine receptor (477 aa).

Topologically, residues 1 to 55 are extracellular; sequence MGQAATHVDANYTLINYTEEVIEDDRDACAVADDPKYPSSFGITLAVPEWEAICT. 2 N-linked (GlcNAc...) asparagine glycosylation sites follow: Asn11 and Asn16. A helical transmembrane segment spans residues 56-78; sequence AIVLTLIIISTIVGNILVILSVF. The Cytoplasmic portion of the chain corresponds to 79–88; it reads TYKPLRIVQN. A helical transmembrane segment spans residues 89–110; it reads FFIVSLAVADLTVAILVLPLNV. At 111-127 the chain is on the extracellular side; the sequence is AYSILGQWVFGIYVCKM. Residues 128–148 form a helical membrane-spanning segment; that stretch reads WLTCDIMCCTSSILNLCAIAL. Topologically, residues 149 to 168 are cytoplasmic; it reads DRYWAITDPINYAQKRTLER. Residues 169–191 traverse the membrane as a helical segment; that stretch reads VLLMIGVVWVLSLIISSPPLLGW. The Extracellular segment spans residues 192 to 216; the sequence is NDWPDVFEPDTPCRLTSQPGFVIFS. The chain crosses the membrane as a helical span at residues 217 to 238; that stretch reads SSGSFYIPLVIMTVVYFEIYLA. Over 239–405 the chain is Cytoplasmic; it reads TKKRLRDRAK…LTRERRAART (167 aa). 2 disordered regions span residues 256-317 and 334-358; these read SSGQ…SKDD and VTDM…THED. Composition is skewed to basic and acidic residues over residues 263–272 and 279–295; these read NNKDDHHDQD and NHNE…DNEK. The segment covering 296–312 has biased composition (basic residues); the sequence is KKRTRKLTPKKKPKRKY. A helical membrane pass occupies residues 406 to 427; that stretch reads LGIIMGVFVVCWLPFFVIYLVI. Residues 428 to 439 are Extracellular-facing; it reads PFCASCCLSNKF. A helical membrane pass occupies residues 440 to 460; it reads INFITWLGYCNSALNPLIYTI. Residues 461 to 477 lie on the Cytoplasmic side of the membrane; the sequence is FNMDFRRAFKKLLCMKP.

It belongs to the G-protein coupled receptor 1 family.

Its subcellular location is the cell membrane. Its function is as follows. Receptor for octopamine. Octopamine (OA) is a neurotransmitter, neurohormone, and neuromodulator in invertebrates. The activity of this receptor is mediated by G proteins which activate adenylyl cyclase. The protein is Octopamine receptor of Heliothis virescens (Tobacco budworm moth).